Here is a 415-residue protein sequence, read N- to C-terminus: Multidrug resistance protein MdtA (415 aa).

The N-terminal stretch at 1–21 (MKGSYKSRWVIVIVVVIAAIA) is a signal peptide. The span at 31-47 (DSQSAAPGATKQAQQSP) shows a compositional bias: polar residues. 2 disordered regions span residues 31-60 (DSQSAAPGATKQAQQSPAGGRRGMRSGPLA) and 392-415 (EAQSTTTSEEKATSREYAKKGARS). Over residues 399-415 (SEEKATSREYAKKGARS) the composition is skewed to basic and acidic residues.

It belongs to the membrane fusion protein (MFP) (TC 8.A.1) family. As to quaternary structure, part of a tripartite efflux system composed of MdtA, MdtB and MdtC.

It localises to the cell inner membrane. Functionally, the MdtABC tripartite complex confers resistance against novobiocin and deoxycholate. The chain is Multidrug resistance protein MdtA from Escherichia coli O139:H28 (strain E24377A / ETEC).